A 371-amino-acid polypeptide reads, in one-letter code: Protein-glutamate methylesterase/protein-glutamine glutaminase 3 (371 aa).

The region spanning arginine 5–aspartate 120 is the Response regulatory domain. Residue aspartate 56 is modified to 4-aspartylphosphate. The region spanning proline 174–glutamine 362 is the CheB-type methylesterase domain. Catalysis depends on residues serine 186, histidine 213, and aspartate 309.

This sequence belongs to the CheB family. In terms of processing, phosphorylated by CheA. Phosphorylation of the N-terminal regulatory domain activates the methylesterase activity.

It is found in the cytoplasm. It carries out the reaction [protein]-L-glutamate 5-O-methyl ester + H2O = L-glutamyl-[protein] + methanol + H(+). The enzyme catalyses L-glutaminyl-[protein] + H2O = L-glutamyl-[protein] + NH4(+). Involved in chemotaxis. Part of a chemotaxis signal transduction system that modulates chemotaxis in response to various stimuli. Catalyzes the demethylation of specific methylglutamate residues introduced into the chemoreceptors (methyl-accepting chemotaxis proteins or MCP) by CheR. Also mediates the irreversible deamidation of specific glutamine residues to glutamic acid. The chain is Protein-glutamate methylesterase/protein-glutamine glutaminase 3 from Geobacter sulfurreducens (strain ATCC 51573 / DSM 12127 / PCA).